The primary structure comprises 684 residues: DNA ligase (684 aa).

Residues 34 to 38 (DFQYD), 83 to 84 (SL), and glutamate 117 each bind NAD(+). Residue lysine 119 is the N6-AMP-lysine intermediate of the active site. Arginine 140, glutamate 186, lysine 300, and lysine 324 together coordinate NAD(+). Residues cysteine 418, cysteine 421, cysteine 436, and cysteine 442 each contribute to the Zn(2+) site. A BRCT domain is found at 601 to 684 (PVNLNFDGMK…EMLGEVGSNE (84 aa)).

This sequence belongs to the NAD-dependent DNA ligase family. LigA subfamily. Mg(2+) is required as a cofactor. The cofactor is Mn(2+).

The enzyme catalyses NAD(+) + (deoxyribonucleotide)n-3'-hydroxyl + 5'-phospho-(deoxyribonucleotide)m = (deoxyribonucleotide)n+m + AMP + beta-nicotinamide D-nucleotide.. Its function is as follows. DNA ligase that catalyzes the formation of phosphodiester linkages between 5'-phosphoryl and 3'-hydroxyl groups in double-stranded DNA using NAD as a coenzyme and as the energy source for the reaction. It is essential for DNA replication and repair of damaged DNA. The polypeptide is DNA ligase (Chlorobium phaeobacteroides (strain BS1)).